Here is a 430-residue protein sequence, read N- to C-terminus: Adenylosuccinate synthetase (430 aa).

GTP-binding positions include 12-18 (GDEGKGK) and 40-42 (GHT). D13 (proton acceptor) is an active-site residue. Positions 13 and 40 each coordinate Mg(2+). IMP contacts are provided by residues 13–16 (DEGK), 38–41 (NAGH), T129, R143, Q224, T239, and R303. Residue H41 is the Proton donor of the active site. A substrate-binding site is contributed by 299–305 (TVSNRKR). GTP contacts are provided by residues R305, 331–333 (KLD), and 413–415 (STG).

It belongs to the adenylosuccinate synthetase family. As to quaternary structure, homodimer. It depends on Mg(2+) as a cofactor.

Its subcellular location is the cytoplasm. The enzyme catalyses IMP + L-aspartate + GTP = N(6)-(1,2-dicarboxyethyl)-AMP + GDP + phosphate + 2 H(+). Its pathway is purine metabolism; AMP biosynthesis via de novo pathway; AMP from IMP: step 1/2. Its function is as follows. Plays an important role in the de novo pathway of purine nucleotide biosynthesis. Catalyzes the first committed step in the biosynthesis of AMP from IMP. The chain is Adenylosuccinate synthetase from Ehrlichia chaffeensis (strain ATCC CRL-10679 / Arkansas).